We begin with the raw amino-acid sequence, 236 residues long: Ubiquinone biosynthesis O-methyltransferase (236 aa).

S-adenosyl-L-methionine is bound by residues Arg39, Gly59, Asp80, and Met124.

Belongs to the methyltransferase superfamily. UbiG/COQ3 family.

It carries out the reaction a 3-demethylubiquinol + S-adenosyl-L-methionine = a ubiquinol + S-adenosyl-L-homocysteine + H(+). The enzyme catalyses a 3-(all-trans-polyprenyl)benzene-1,2-diol + S-adenosyl-L-methionine = a 2-methoxy-6-(all-trans-polyprenyl)phenol + S-adenosyl-L-homocysteine + H(+). It participates in cofactor biosynthesis; ubiquinone biosynthesis. Functionally, O-methyltransferase that catalyzes the 2 O-methylation steps in the ubiquinone biosynthetic pathway. This chain is Ubiquinone biosynthesis O-methyltransferase, found in Shewanella pealeana (strain ATCC 700345 / ANG-SQ1).